We begin with the raw amino-acid sequence, 130 residues long: Small ribosomal subunit protein uS11 (130 aa).

This sequence belongs to the universal ribosomal protein uS11 family. Part of the 30S ribosomal subunit. Interacts with proteins S7 and S18. Binds to IF-3.

In terms of biological role, located on the platform of the 30S subunit, it bridges several disparate RNA helices of the 16S rRNA. Forms part of the Shine-Dalgarno cleft in the 70S ribosome. In Prochlorococcus marinus (strain NATL2A), this protein is Small ribosomal subunit protein uS11.